We begin with the raw amino-acid sequence, 374 residues long: N5-carboxyaminoimidazole ribonucleotide synthase (374 aa).

ATP-binding positions include R108, K148, 153-159, 183-186, E191, H214, and 266-267; these read GYDGKGQ, EKYL, and NE. The 185-residue stretch at 112–296 folds into the ATP-grasp domain; the sequence is KETLKSAGTK…QFDTHILAVT (185 aa).

Belongs to the PurK/PurT family. Homodimer.

The enzyme catalyses 5-amino-1-(5-phospho-beta-D-ribosyl)imidazole + hydrogencarbonate + ATP = 5-carboxyamino-1-(5-phospho-D-ribosyl)imidazole + ADP + phosphate + 2 H(+). Its pathway is purine metabolism; IMP biosynthesis via de novo pathway; 5-amino-1-(5-phospho-D-ribosyl)imidazole-4-carboxylate from 5-amino-1-(5-phospho-D-ribosyl)imidazole (N5-CAIR route): step 1/2. In terms of biological role, catalyzes the ATP-dependent conversion of 5-aminoimidazole ribonucleotide (AIR) and HCO(3)(-) to N5-carboxyaminoimidazole ribonucleotide (N5-CAIR). The sequence is that of N5-carboxyaminoimidazole ribonucleotide synthase from Staphylococcus aureus (strain MRSA252).